The primary structure comprises 690 residues: Choline transporter-like 1 (690 aa).

A helical membrane pass occupies residues 23-43; it reads IFWLVLYVVFWIALIVIAVFS. Residue asparagine 134 is glycosylated (N-linked (GlcNAc...) asparagine). The next 4 helical transmembrane spans lie at 203–223, 237–259, 282–302, and 334–354; these read LYKA…FSIV, WLIC…WSYY, ATIY…LVVI, and LLAF…VVCL. Asparagine 391 is a glycosylation site (N-linked (GlcNAc...) asparagine). A run of 4 helical transmembrane segments spans residues 415-435, 464-484, 565-585, and 594-614; these read IYII…QLAI, LGSV…RLIL, FVLF…SILL, and FYMA…HIIL.

The protein belongs to the CTL (choline transporter-like) family.

It localises to the membrane. The polypeptide is Choline transporter-like 1 (Anopheles gambiae (African malaria mosquito)).